The sequence spans 274 residues: NH(3)-dependent NAD(+) synthetase (274 aa).

Gly-46–Ser-53 lines the ATP pocket. A Mg(2+)-binding site is contributed by Asp-52. Residue Arg-140 coordinates deamido-NAD(+). Thr-160 lines the ATP pocket. Position 165 (Glu-165) interacts with Mg(2+). Deamido-NAD(+) contacts are provided by Lys-173 and Asp-180. The ATP site is built by Lys-189 and Thr-211. A deamido-NAD(+)-binding site is contributed by His-260–Lys-261.

The protein belongs to the NAD synthetase family. As to quaternary structure, homodimer.

It catalyses the reaction deamido-NAD(+) + NH4(+) + ATP = AMP + diphosphate + NAD(+) + H(+). It participates in cofactor biosynthesis; NAD(+) biosynthesis; NAD(+) from deamido-NAD(+) (ammonia route): step 1/1. In terms of biological role, catalyzes the ATP-dependent amidation of deamido-NAD to form NAD. Uses ammonia as a nitrogen source. This Lactococcus lactis subsp. cremoris (strain SK11) protein is NH(3)-dependent NAD(+) synthetase.